The chain runs to 226 residues: Probable septum site-determining protein MinC (226 aa).

The protein belongs to the MinC family. In terms of assembly, interacts with MinD and FtsZ.

Its function is as follows. Cell division inhibitor that blocks the formation of polar Z ring septums. Rapidly oscillates between the poles of the cell to destabilize FtsZ filaments that have formed before they mature into polar Z rings. Prevents FtsZ polymerization. The polypeptide is Probable septum site-determining protein MinC (Bacillus velezensis (strain DSM 23117 / BGSC 10A6 / LMG 26770 / FZB42) (Bacillus amyloliquefaciens subsp. plantarum)).